We begin with the raw amino-acid sequence, 546 residues long: Thermolysin (546 aa).

Residues 1-25 (MDKRAMLGAIGLAFGLMAWPFGASA) form the signal peptide. The propeptide at 26–228 (KEKSMVWNEQ…EAKPGGGQPV (203 aa)) is activation peptide. Residues Asp-287, Asp-289, Gln-291, and Asp-368 each coordinate Ca(2+). His-372 is a binding site for Zn(2+). Glu-373 is an active-site residue. The Zn(2+) site is built by His-376 and Glu-396. 8 residues coordinate Ca(2+): Asn-413, Asp-415, Glu-417, Glu-420, Tyr-423, Thr-424, Ile-427, and Asp-430. The Proton donor role is filled by His-461.

The protein belongs to the peptidase M4 family. The cofactor is Ca(2+). Requires Zn(2+) as cofactor.

The protein resides in the secreted. The enzyme catalyses Preferential cleavage: Xaa-|-Leu &gt; Xaa-|-Phe.. Functionally, extracellular zinc metalloprotease. Has collagenase activity. This Bacillus sp. (strain EA1) protein is Thermolysin (npr).